The primary structure comprises 682 residues: Kinesin-like protein KIF2A (682 aa).

Positions 1-192 (MVTSLNEDSE…LDYRPLTTSD (192 aa)) are globular. The segment at 39–129 (LAPDEEIDPG…GKKDFGLASR (91 aa)) is disordered. Over residues 99-115 (IEQSASRQQNGSVSDIS) the composition is skewed to polar residues. The Kinesin motor domain maps to 198–528 (RICVCVRKRP…LRYANRVKEL (331 aa)). 288-295 (GQTGSGKT) serves as a coordination point for ATP. Residues 638-673 (QLEAILEKKIDILTELRDKVKSFRAALQEEEHASKQ) adopt a coiled-coil conformation.

Belongs to the TRAFAC class myosin-kinesin ATPase superfamily. Kinesin family. MCAK/KIF2 subfamily. In terms of assembly, interacts with aurka and plk1. Post-translationally, phosphorylation by plk1 promotes location at spindle microtubules and spindle poles, and enhances its microtubule depolymerization activity. Phosphorylation by AURKA interferes with location at spindle microtubules and spindle poles, and inhibits its microtubule depolymerization activity.

Its subcellular location is the cytoplasm. The protein localises to the cytoskeleton. It is found in the microtubule organizing center. It localises to the centrosome. The protein resides in the spindle pole. Its subcellular location is the spindle. Plus end-directed microtubule-dependent motor. May regulate microtubule dynamics during axonal growth. Required for normal progression through mitosis. Required for normal congress of chromosomes at the metaphase plate. Required for normal spindle dynamics during mitosis. Promotes spindle turnover. Implicated in formation of bipolar mitotic spindles Has microtubule depolymerization activity. In Xenopus laevis (African clawed frog), this protein is Kinesin-like protein KIF2A (kif2a).